A 324-amino-acid chain; its full sequence is Antihemorrhagic factor jMSF (324 aa).

A signal peptide spans 1–19; the sequence is MHFLVALVLLGQIIGSTLS. Cystatin fetuin-A-type domains lie at 22 to 130 and 141 to 254; these read VRGD…VKCH and RNCP…SDCV. A Cell attachment site motif is present at residues 23-25; the sequence is RGD. 7 cysteine pairs are disulfide-bonded: Cys28–Cys315, Cys85–Cys96, Cys110–Cys129, Cys143–Cys146, Cys205–Cys217, Cys230–Cys253, and Cys287–Cys291. N-linked (GlcNAc...) asparagine glycosylation is present at Asn204. The N-linked (GlcNAc...) asparagine glycan is linked to Asn282.

As to quaternary structure, homodimer. Expressed by the liver.

The protein localises to the secreted. Functionally, suppress hemorrhage induced by metalloproteinases from the same venom (brevilysin-H3, -H4, -H6) and from habu venom (weak inhibition of the metalloproteinases HR2A). The non-hemorrhagic brevilysin-H2 is strongly inhibited by jMSF, whereas the brevilysin-L6 is not inhibited. Does not inhibit serine and cysteine proteases such as trypsin, chymotrypsin, thermolysin, and papain. The inhibition may occur by formation of a non-covalent complex between this protein and the proteinases at their metalloproteinase domains. The sequence is that of Antihemorrhagic factor jMSF from Gloydius blomhoffii (Mamushi).